The chain runs to 146 residues: Acidic phospholipase A2 2 (146 aa).

The first 21 residues, 1-21, serve as a signal peptide directing secretion; it reads MNPAHLLILAAVCVSSLGASS. The propeptide occupies 22-27; it reads NRPMPL. 7 disulfides stabilise this stretch: Cys38-Cys98, Cys53-Cys145, Cys55-Cys71, Cys70-Cys126, Cys77-Cys119, Cys87-Cys112, and Cys105-Cys117. Tyr54, Gly56, and Gly58 together coordinate Ca(2+). His74 is a catalytic residue. Asp75 contributes to the Ca(2+) binding site. Residue Asp120 is part of the active site.

Belongs to the phospholipase A2 family. Group I subfamily. D49 sub-subfamily. It depends on Ca(2+) as a cofactor. Expressed by the venom gland.

The protein resides in the secreted. It carries out the reaction a 1,2-diacyl-sn-glycero-3-phosphocholine + H2O = a 1-acyl-sn-glycero-3-phosphocholine + a fatty acid + H(+). Its function is as follows. PLA2 catalyzes the calcium-dependent hydrolysis of the 2-acyl groups in 3-sn-phosphoglycerides. This chain is Acidic phospholipase A2 2, found in Naja kaouthia (Monocled cobra).